Reading from the N-terminus, the 787-residue chain is ABC transporter G family member 5 (787 aa).

Residues 1-17 are compositionally biased toward basic and acidic residues; that stretch reads MSRFVDKLPLFDRRPSP. Disordered stretches follow at residues 1–25 and 71–116; these read MSRF…EGLP and NDAR…EGQP. Residues 74–85 are compositionally biased toward polar residues; it reads RSGSSTPISSPR. The ABC transporter domain maps to 121-382; the sequence is LKFTDLTYSV…FLDFGKPIPD (262 aa). 175–182 is a binding site for ATP; the sequence is GASGSGKS. In terms of domain architecture, ABC transmembrane type-2 spans 484-691; sequence GVLTRRAFIN…PYEAVMQNEF (208 aa). Transmembrane regions (helical) follow at residues 500–520, 535–555, 576–596, 599–619, 620–640, 641–661, 728–745, and 760–780; these read VFII…TIFW, FFAI…PVFL, VLSH…AFAL, FFSV…AIVL, ASFW…THVM, LGFP…GFFI, SLGV…GPDF, and LWIT…SLLL.

Belongs to the ABC transporter superfamily. ABCG family. Eye pigment precursor importer (TC 3.A.1.204) subfamily. As to expression, expressed in the crown root primordia, endodermis, pericycle and stele in the root, in leaf primordia of main and axillary shoots, and in the vascular cells and leaf epidermis of older leaves.

The protein resides in the cell membrane. In terms of biological role, essential transporter for growth and development under abiotic stress. Mediates shoot branching by promoting the outgrowth of lateral shoots. Required for salt tolerance via Na/K homeostasis, at least partly by regulating SKC1/OsHKT1;5. Necessary for hypodermal suberization of roots, which contributes to formation of the apoplastic barrier. The sequence is that of ABC transporter G family member 5 from Oryza sativa subsp. japonica (Rice).